Reading from the N-terminus, the 873-residue chain is K(+)/H(+) antiporter 1 (873 aa).

Over 1 to 23 the chain is Extracellular; the sequence is MANTVGGILSGVNPFHYNSSSPL. Residues 24 to 44 form a helical membrane-spanning segment; it reads TLFLFQACLILLVCNLIHIPF. Residues 45–51 are Cytoplasmic-facing; that stretch reads SMMRQPK. Residues 52–72 form a helical membrane-spanning segment; the sequence is VISEVISGVILGPTIFGQIPN. The Extracellular portion of the chain corresponds to 73 to 82; the sequence is YTNTIFPTSS. A helical membrane pass occupies residues 83–103; it reads IPGLNLVANLGIILFMFFLGL. Residues 104 to 116 are Cytoplasmic-facing; sequence EVDIAFIKKHLKK. Residues 117–137 traverse the membrane as a helical segment; the sequence is ALVIGIVTLAVPFGFGCLLAI. Residues 138–154 are Extracellular-facing; sequence PLFHTYANKTEGERHIK. The chain crosses the membrane as a helical span at residues 155 to 175; it reads FSVFMVFIAVSISVTAFPVLC. Residues 176–188 are Cytoplasmic-facing; sequence RILNELRLIKDRA. A helical membrane pass occupies residues 189-209; that stretch reads GIVVLAAGIINDIMGWILLAL. Topologically, residues 210–220 are extracellular; it reads SIILSSAEGSP. The helical transmembrane segment at 221 to 241 threads the bilayer; it reads VNTVYILLITFAWFLIYFFPL. The Cytoplasmic portion of the chain corresponds to 242–267; that stretch reads KYLLRWVLIRTHELDRSKPSPLATMC. The chain crosses the membrane as a helical span at residues 268-288; the sequence is ILFIMFISAYFTDIIGVHPIF. The Extracellular segment spans residues 289 to 316; that stretch reads GAFIAGLVVPRDDHYVVKLTERMEDIPN. Residues 317–337 traverse the membrane as a helical segment; it reads IVFIPIYFAVAGLNVDLTLLN. Residues 338-341 lie on the Cytoplasmic side of the membrane; that stretch reads EGRD. Residues 342–362 form a helical membrane-spanning segment; that stretch reads WGYVFATIGIAIFTKIISGTL. At 363–375 the chain is on the extracellular side; that stretch reads TAKLTGLFWREAT. Residues 376–396 traverse the membrane as a helical segment; the sequence is AAGVLMSCKGIVEIVVLTVGL. Over 397–404 the chain is Cytoplasmic; it reads NAGIISRK. Residues 405–425 traverse the membrane as a helical segment; the sequence is IFGMFVLMALVSTFVTTPLTQ. Residues 426 to 726 are Extracellular-facing; the sequence is LVYPDSYRDG…DRFKRKRFNL (301 aa). Serine 557 carries the post-translational modification Phosphoserine. Residue lysine 562 forms a Glycyl lysine isopeptide (Lys-Gly) (interchain with G-Cter in ubiquitin) linkage. The helical transmembrane segment at 727 to 747 threads the bilayer; the sequence is LLPKPYLTQSDYLGLYLLLLI. Residues 748–873 lie on the Cytoplasmic side of the membrane; it reads CYRDGYNNDN…TLIVHHFSSE (126 aa).

It belongs to the monovalent cation:proton antiporter 2 (CPA2) transporter (TC 2.A.37) family.

Its subcellular location is the membrane. In terms of biological role, potassium-proton antiport. This chain is K(+)/H(+) antiporter 1 (KHA1), found in Saccharomyces cerevisiae (strain ATCC 204508 / S288c) (Baker's yeast).